The primary structure comprises 203 residues: GTP cyclohydrolase 1 (203 aa).

Zn(2+) contacts are provided by C87, H90, and C158.

The protein belongs to the GTP cyclohydrolase I family. In terms of assembly, homomer.

The catalysed reaction is GTP + H2O = 7,8-dihydroneopterin 3'-triphosphate + formate + H(+). It participates in cofactor biosynthesis; 7,8-dihydroneopterin triphosphate biosynthesis; 7,8-dihydroneopterin triphosphate from GTP: step 1/1. The chain is GTP cyclohydrolase 1 from Xylella fastidiosa (strain M23).